We begin with the raw amino-acid sequence, 95 residues long: Small ribosomal subunit protein uS17 (95 aa).

It belongs to the universal ribosomal protein uS17 family. In terms of assembly, part of the 30S ribosomal subunit.

Functionally, one of the primary rRNA binding proteins, it binds specifically to the 5'-end of 16S ribosomal RNA. The chain is Small ribosomal subunit protein uS17 from Phytoplasma australiense.